Reading from the N-terminus, the 589-residue chain is Serine/threonine-protein phosphatase 2A 65 kDa regulatory subunit A alpha isoform (589 aa).

Residue alanine 2 is modified to N-acetylalanine. HEAT repeat units follow at residues 8–46 (DSLY…GVER), 47–84 (TRSE…GGPE), 85–123 (YVHC…SPSD), 124–161 (LEAH…VSSA), 162–200 (VKAE…ELDN), 201–239 (VKSE…PQED), 240–278 (LEAL…GPEI), 279–321 (TKTD…RENV), 322–360 (IMTQ…GKDN), 361–399 (TIEH…GIRQ), 400–438 (LSQS…GVEF), 439–477 (FDEK…GKEW), 478–516 (AHAT…GQDI), 517–555 (TTKH…DNST), and 556–589 (LQSE…LSLA). An N6-acetyllysine modification is found at lysine 280.

It belongs to the phosphatase 2A regulatory subunit A family. PP2A consists of a common heterodimeric core enzyme, composed of PPP2CA a 36 kDa catalytic subunit (subunit C) and PPP2R1A a 65 kDa constant regulatory subunit (PR65 or subunit A), that associates with a variety of regulatory subunits. Proteins that associate with the core dimer include three families of regulatory subunits B (the R2/B/PR55/B55, R3/B''/PR72/PR130/PR59 and R5/B'/B56 families), the 48 kDa variable regulatory subunit, viral proteins, and cell signaling molecules. Found in a complex with at least ARL2, PPP2CB, PPP2R1A, PPP2R2A, PPP2R5E and TBCD. Interacts with the PP2A C catalytic subunit PPP2CA. Interacts with the PP2A B subunit PPP2R2A. Interacts with the PP2A B subunit PPP2R5D. Interacts with FOXO1; the interaction dephosphorylates FOXO1 on AKT-mediated phosphorylation sites. Interacts with IPO9. Interacts with TP53 and SGO1. Interacts with PLA2G16; this interaction might decrease PP2A activity. Interacts with CTTNBP2NL. Interacts with GNA12; the interaction promotes protein phosphatase 2A activation causing dephosphorylation of MAPT. Interacts with CIP2A; this interaction stabilizes CIP2A. Interacts with PABIR1/FAM122A. Interacts with ADCY8; antagonizes interaction between ADCY8 and calmodulin. Interacts with CRTC3 (when phosphorylated at 'Ser-391'). Interacts with SPRY2. Part of the core of STRIPAK complexes composed of PP2A catalytic and scaffolding subunits, the striatins (PP2A regulatory subunits), the striatin-associated proteins MOB4, STRIP1 and STRIP2, PDCD10 and members of the STE20 kinases, such as STK24 and STK26. Component of the Integrator-PP2A (INTAC) complex, composed of the Integrator core complex and protein phosphatase 2A subunits PPP2CA and PPP2R1A.

Its subcellular location is the cytoplasm. The protein resides in the nucleus. It localises to the chromosome. It is found in the centromere. The protein localises to the lateral cell membrane. Its subcellular location is the cell projection. The protein resides in the dendrite. Its function is as follows. The PR65 subunit of protein phosphatase 2A serves as a scaffolding molecule to coordinate the assembly of the catalytic subunit and a variable regulatory B subunit. Upon interaction with GNA12 promotes dephosphorylation of microtubule associated protein TAU/MAPT. Required for proper chromosome segregation and for centromeric localization of SGO1 in mitosis. Together with RACK1 adapter, mediates dephosphorylation of AKT1 at 'Ser-473', preventing AKT1 activation and AKT-mTOR signaling pathway. Dephosphorylation of AKT1 is essential for regulatory T-cells (Treg) homeostasis and stability. Part of the striatin-interacting phosphatase and kinase (STRIPAK) complexes. STRIPAK complexes have critical roles in protein (de)phosphorylation and are regulators of multiple signaling pathways including Hippo, MAPK, nuclear receptor and cytoskeleton remodeling. Different types of STRIPAK complexes are involved in a variety of biological processes such as cell growth, differentiation, apoptosis, metabolism and immune regulation. Key mediator of a quality checkpoint during transcription elongation as part of the Integrator-PP2A (INTAC) complex. The INTAC complex drives premature transcription termination of transcripts that are unfavorably configured for transcriptional elongation: within the INTAC complex, acts as a scaffolding subunit for PPP2CA, which catalyzes dephosphorylation of the C-terminal domain (CTD) of Pol II subunit POLR2A/RPB1 and SUPT5H/SPT5, thereby preventing transcriptional elongation. Regulates the recruitment of the SKA complex to kinetochores. In Mus musculus (Mouse), this protein is Serine/threonine-protein phosphatase 2A 65 kDa regulatory subunit A alpha isoform (Ppp2r1a).